The chain runs to 181 residues: Mitochondrial inner membrane protein Mpv17 (181 aa).

Transmembrane regions (helical) follow at residues 20-38, 48-70, 91-113, and 140-162; these read VIVS…QYLT, TARF…FRVL, FMFS…GFSF, and LINF…AFFW.

This sequence belongs to the peroxisomal membrane protein PXMP2/4 family.

The protein localises to the mitochondrion inner membrane. Involved in mitochondria homeostasis. The sequence is that of Mitochondrial inner membrane protein Mpv17 from Caenorhabditis briggsae.